Here is a 177-residue protein sequence, read N- to C-terminus: Large ribosomal subunit protein uL6 (177 aa).

Belongs to the universal ribosomal protein uL6 family. As to quaternary structure, part of the 50S ribosomal subunit.

Its function is as follows. This protein binds to the 23S rRNA, and is important in its secondary structure. It is located near the subunit interface in the base of the L7/L12 stalk, and near the tRNA binding site of the peptidyltransferase center. In Pectobacterium atrosepticum (strain SCRI 1043 / ATCC BAA-672) (Erwinia carotovora subsp. atroseptica), this protein is Large ribosomal subunit protein uL6.